The sequence spans 415 residues: 8-amino-7-oxononanoate synthase (415 aa).

R21 lines the substrate pocket. 117–118 (GY) contacts pyridoxal 5'-phosphate. H149 provides a ligand contact to substrate. Pyridoxal 5'-phosphate is bound by residues S195, H223, and T251. K254 bears the N6-(pyridoxal phosphate)lysine mark. Substrate is bound at residue T374.

The protein belongs to the class-II pyridoxal-phosphate-dependent aminotransferase family. BioF subfamily. As to quaternary structure, homodimer. Pyridoxal 5'-phosphate is required as a cofactor.

The catalysed reaction is 6-carboxyhexanoyl-[ACP] + L-alanine + H(+) = (8S)-8-amino-7-oxononanoate + holo-[ACP] + CO2. It participates in cofactor biosynthesis; biotin biosynthesis. Functionally, catalyzes the decarboxylative condensation of pimeloyl-[acyl-carrier protein] and L-alanine to produce 8-amino-7-oxononanoate (AON), [acyl-carrier protein], and carbon dioxide. The chain is 8-amino-7-oxononanoate synthase from Ralstonia pickettii (strain 12J).